A 219-amino-acid polypeptide reads, in one-letter code: Thymidylate kinase (219 aa).

7–14 (GIDGAGKS) is an ATP binding site.

It belongs to the thymidylate kinase family.

The enzyme catalyses dTMP + ATP = dTDP + ADP. Its function is as follows. Phosphorylation of dTMP to form dTDP in both de novo and salvage pathways of dTTP synthesis. The sequence is that of Thymidylate kinase from Chlorobium limicola (strain DSM 245 / NBRC 103803 / 6330).